The following is a 473-amino-acid chain: tRNA modification GTPase MnmE (473 aa).

3 residues coordinate (6S)-5-formyl-5,6,7,8-tetrahydrofolate: Arg30, Glu95, and Arg134. The TrmE-type G domain maps to 230-394; sequence GVSTVIAGRP…LKLLMASMVE (165 aa). GTP is bound by residues 240–245, 259–265, and 284–287; these read NAGKST, SHMPGTT, and DTAG. 2 residues coordinate Mg(2+): Ser244 and Thr265. A (6S)-5-formyl-5,6,7,8-tetrahydrofolate-binding site is contributed by Lys473.

This sequence belongs to the TRAFAC class TrmE-Era-EngA-EngB-Septin-like GTPase superfamily. TrmE GTPase family. In terms of assembly, homodimer. Heterotetramer of two MnmE and two MnmG subunits. It depends on K(+) as a cofactor.

It localises to the cytoplasm. Exhibits a very high intrinsic GTPase hydrolysis rate. Involved in the addition of a carboxymethylaminomethyl (cmnm) group at the wobble position (U34) of certain tRNAs, forming tRNA-cmnm(5)s(2)U34. In Chlorobium luteolum (strain DSM 273 / BCRC 81028 / 2530) (Pelodictyon luteolum), this protein is tRNA modification GTPase MnmE.